We begin with the raw amino-acid sequence, 503 residues long: Probable DNA ligase (503 aa).

Position 210 (Glu210) interacts with ATP. Lys212 serves as the catalytic N6-AMP-lysine intermediate. 6 residues coordinate ATP: Arg217, Arg232, Glu261, Phe296, Arg367, and Lys373.

This sequence belongs to the ATP-dependent DNA ligase family. The cofactor is Mg(2+).

It catalyses the reaction ATP + (deoxyribonucleotide)n-3'-hydroxyl + 5'-phospho-(deoxyribonucleotide)m = (deoxyribonucleotide)n+m + AMP + diphosphate.. Its function is as follows. DNA ligase that seals nicks in double-stranded DNA during DNA replication, DNA recombination and DNA repair. This Rhodococcus jostii (strain RHA1) protein is Probable DNA ligase.